The primary structure comprises 158 residues: Sec-independent protein translocase protein TatB (158 aa).

The chain crosses the membrane as a helical span at residues 1–21 (MFGISFSELLLVGLVALLVLG). Positions 73 to 158 (DEARKMFAPN…HDSSLPPRAP (86 aa)) are disordered. Residues 80-90 (APNQPSENSPE) are compositionally biased toward low complexity.

The protein belongs to the TatB family. In terms of assembly, the Tat system comprises two distinct complexes: a TatABC complex, containing multiple copies of TatA, TatB and TatC subunits, and a separate TatA complex, containing only TatA subunits. Substrates initially bind to the TatABC complex, which probably triggers association of the separate TatA complex to form the active translocon.

Its subcellular location is the cell inner membrane. Functionally, part of the twin-arginine translocation (Tat) system that transports large folded proteins containing a characteristic twin-arginine motif in their signal peptide across membranes. Together with TatC, TatB is part of a receptor directly interacting with Tat signal peptides. TatB may form an oligomeric binding site that transiently accommodates folded Tat precursor proteins before their translocation. The polypeptide is Sec-independent protein translocase protein TatB (Pseudomonas syringae pv. syringae (strain B728a)).